The sequence spans 891 residues: Alanine--tRNA ligase (891 aa).

The Zn(2+) site is built by histidine 564, histidine 568, cysteine 678, and histidine 682.

This sequence belongs to the class-II aminoacyl-tRNA synthetase family. The cofactor is Zn(2+).

It localises to the cytoplasm. It catalyses the reaction tRNA(Ala) + L-alanine + ATP = L-alanyl-tRNA(Ala) + AMP + diphosphate. Functionally, catalyzes the attachment of alanine to tRNA(Ala) in a two-step reaction: alanine is first activated by ATP to form Ala-AMP and then transferred to the acceptor end of tRNA(Ala). Also edits incorrectly charged Ser-tRNA(Ala) and Gly-tRNA(Ala) via its editing domain. The chain is Alanine--tRNA ligase from Nitrobacter hamburgensis (strain DSM 10229 / NCIMB 13809 / X14).